The sequence spans 158 residues: 2-C-methyl-D-erythritol 2,4-cyclodiphosphate synthase (158 aa).

Positions 9 and 11 each coordinate a divalent metal cation. 4-CDP-2-C-methyl-D-erythritol 2-phosphate-binding positions include 9 to 11 and 35 to 36; these read DVH and HS. His43 provides a ligand contact to a divalent metal cation. Residues 57 to 59, 62 to 66, 101 to 107, 133 to 136, Phe140, and Arg143 contribute to the 4-CDP-2-C-methyl-D-erythritol 2-phosphate site; these read DIG, FPDTD, AQAPKMA, and TTTE.

The protein belongs to the IspF family. In terms of assembly, homotrimer. A divalent metal cation is required as a cofactor.

The enzyme catalyses 4-CDP-2-C-methyl-D-erythritol 2-phosphate = 2-C-methyl-D-erythritol 2,4-cyclic diphosphate + CMP. Its pathway is isoprenoid biosynthesis; isopentenyl diphosphate biosynthesis via DXP pathway; isopentenyl diphosphate from 1-deoxy-D-xylulose 5-phosphate: step 4/6. Functionally, involved in the biosynthesis of isopentenyl diphosphate (IPP) and dimethylallyl diphosphate (DMAPP), two major building blocks of isoprenoid compounds. Catalyzes the conversion of 4-diphosphocytidyl-2-C-methyl-D-erythritol 2-phosphate (CDP-ME2P) to 2-C-methyl-D-erythritol 2,4-cyclodiphosphate (ME-CPP) with a corresponding release of cytidine 5-monophosphate (CMP). The sequence is that of 2-C-methyl-D-erythritol 2,4-cyclodiphosphate synthase from Vibrio vulnificus (strain CMCP6).